The sequence spans 238 residues: Cysteine-rich venom protein 2 (238 aa).

The N-terminal stretch at 1 to 19 (MIAFIVLLSLAAVLQQSSG) is a signal peptide. Positions 38 to 164 (VDKHNALRRS…STKYLYVCQY (127 aa)) constitute an SCP domain. 8 disulfides stabilise this stretch: Cys75–Cys153, Cys92–Cys165, Cys148–Cys162, Cys184–Cys191, Cys187–Cys196, Cys200–Cys233, Cys209–Cys227, and Cys218–Cys231. The ShKT domain maps to 200 to 233 (CEYEDAYTNCNDLVKERKCQTEWIKSQCPATCFC).

The protein belongs to the CRISP family. Expressed by the venom gland.

The protein localises to the secreted. In terms of biological role, blocks contraction of smooth muscle elicited by high potassium-induced depolarization, but does not block caffeine-stimulated contraction. May target voltage-gated calcium channels (Cav) on smooth muscle. The sequence is that of Cysteine-rich venom protein 2 from Hydrophis hardwickii (Hardwick's spine-bellied seasnake).